Here is a 126-residue protein sequence, read N- to C-terminus: Protein ApaG (126 aa).

The ApaG domain occupies 2–126 (SDTQHQVNVR…FRLAVPGALH (125 aa)).

The protein is Protein ApaG of Pseudomonas aeruginosa (strain LESB58).